The primary structure comprises 588 residues: Adenine deaminase (588 aa).

The protein belongs to the metallo-dependent hydrolases superfamily. Adenine deaminase family. As to quaternary structure, homodimer. Mn(2+) serves as cofactor.

It carries out the reaction adenine + H2O + H(+) = hypoxanthine + NH4(+). This chain is Adenine deaminase, found in Escherichia coli (strain SMS-3-5 / SECEC).